A 1485-amino-acid polypeptide reads, in one-letter code: Cystic fibrosis transmembrane conductance regulator (1485 aa).

Residues 1 to 78 (MQKTPLEKAS…KLINALKRCF (78 aa)) are Cytoplasmic-facing. A helical transmembrane segment spans residues 79–99 (FWKFLFYGILLYLGEVTKAVQ). The ABC transmembrane type-1 1 domain occupies 82 to 366 (FLFYGILLYL…WAVQTWYDSL (285 aa)). Residues 100-123 (PLLLGRIIASYDRDNEHERSIAYY) are Extracellular-facing. The helical transmembrane segment at 124-147 (LAIGLCLLFVVRMLLLHPAIFGLH) threads the bilayer. Residues 148 to 196 (HIGMQMRIAMFSLIYKKTLKLSSKVLDKISTGQLVSLLSNNLNKFDEGL) are Cytoplasmic-facing. A helical transmembrane segment spans residues 197-217 (ALAHFVWIAPLQVLLLMGLLW). Topologically, residues 218–223 (DLLQAS) are extracellular. Residues 224-244 (AFCGLGFLIILSLFQARLGRM) traverse the membrane as a helical segment. At 245–299 (MMKYKDKRAGKINERLVITSQIIENIQSVKAYCWENAMEKIIETIRETELKLTRK) the chain is on the cytoplasmic side. The helical transmembrane segment at 300–320 (AAYVRYFNSSAFFFSGFFVVF) threads the bilayer. The Extracellular segment spans residues 321–340 (LSIVPHLLLDGISLRKIFTT). The helical transmembrane segment at 341 to 359 (ISFSIVLRMAVTRQFPWAV) threads the bilayer. Residues 360–860 (QTWYDSLGVI…YLRFLTAHKN (501 aa)) are Cytoplasmic-facing. ATP is bound by residues Trp402, Ser435, 459–466 (GSTGAGKT), and Gln494. Residues 422-647 (ISNEDPSAFF…RPEFSSHLIG (226 aa)) form the ABC transporter 1 domain. The interval 652–833 (NAERRNSIIT…EEINEEDLKE (182 aa)) is disordered R region. The segment covering 750–760 (PRSNFLNTGPT) has biased composition (polar residues). A helical transmembrane segment spans residues 861-881 (FIFILVFCLVIFFVEVAASSA). In terms of domain architecture, ABC transmembrane type-1 2 spans 880 to 1163 (SAWLWIIKRN…ASIDVDSLMR (284 aa)). At 882–923 (WLWIIKRNAPAINMTSNENVSEVSDTLSVIVTHTSFYYVFYI) the chain is on the extracellular side. Residues Asn894 and Asn900 are each glycosylated (N-linked (GlcNAc...) asparagine). A discontinuously helical transmembrane segment spans residues 924 to 944 (YVGVADSLLALGIFRGLPLVH). Residues 945 to 995 (SLISVSKVLHKKMLHAILHAPMSTFNTMRAGRILNRFSKDTAILDDILPLS) are Cytoplasmic-facing. The chain crosses the membrane as a helical span at residues 996-1016 (IFDLTQLVLIVIGAITVVSLL). Topologically, residues 1017-1018 (EP) are extracellular. The helical transmembrane segment at 1019–1039 (YIFLATVPVIVAFILLRSYFL) threads the bilayer. The Cytoplasmic segment spans residues 1040–1100 (HTSQQLKQLE…TANWFLYLST (61 aa)). Residues 1101 to 1121 (LRWFQMTIEMIFVIFFIAVSF) form a helical membrane-spanning segment. Topologically, residues 1122–1135 (ISIATSGAGEEKVG) are extracellular. A helical transmembrane segment spans residues 1136-1156 (IVLTLAMNIMNTLQWAVNASI). Residues 1157–1485 (DVDSLMRSVS…TEEEVQDTRL (329 aa)) lie on the Cytoplasmic side of the membrane. Residues 1213–1446 (MTVKNLSANY…KSFFKQAISH (234 aa)) enclose the ABC transporter 2 domain. ATP-binding positions include Tyr1222 and 1247-1254 (GRTGSGKS). The disordered stretch occupies residues 1458-1485 (RNSSKRKSRPQISALQEETEEEVQDTRL). Over residues 1474–1485 (EETEEEVQDTRL) the composition is skewed to acidic residues. Positions 1483–1485 (TRL) match the PDZ-binding motif.

This sequence belongs to the ABC transporter superfamily. ABCC family. CFTR transporter (TC 3.A.1.202) subfamily. As to quaternary structure, monomer; does not require oligomerization for channel activity. May form oligomers in the membrane. Phosphorylated; cAMP treatment promotes phosphorylation and activates the channel. Dephosphorylation decreases the ATPase activity (in vitro). Phosphorylation at PKA sites activates the channel. Phosphorylation at PKC sites enhances the response to phosphorylation by PKA.

Its subcellular location is the apical cell membrane. It is found in the early endosome membrane. The protein localises to the cell membrane. It localises to the recycling endosome membrane. The protein resides in the endoplasmic reticulum membrane. The enzyme catalyses ATP + H2O + closed Cl(-) channel = ADP + phosphate + open Cl(-) channel.. It catalyses the reaction chloride(in) = chloride(out). The catalysed reaction is hydrogencarbonate(in) = hydrogencarbonate(out). It carries out the reaction ATP + H2O = ADP + phosphate + H(+). Epithelial ion channel that plays an important role in the regulation of epithelial ion and water transport and fluid homeostasis. Mediates the transport of chloride ions across the cell membrane. Possesses an intrinsic ATPase activity and utilizes ATP to gate its channel; the passive flow of anions through the channel is gated by cycles of ATP binding and hydrolysis by the ATP-binding domains. The ion channel is also permeable to HCO(3)(-); selectivity depends on the extracellular chloride concentration. Exerts its function also by modulating the activity of other ion channels and transporters. Contributes to the regulation of the pH and the ion content of the epithelial fluid layer. This is Cystic fibrosis transmembrane conductance regulator from Xenopus laevis (African clawed frog).